The primary structure comprises 200 residues: GTP cyclohydrolase-2 (200 aa).

Residue 52-56 participates in GTP binding; sequence RIHSE. Zn(2+)-binding residues include C57, C68, and C70. Residues Q73, 94-96, and T116 contribute to the GTP site; that span reads EGR. D128 serves as the catalytic Proton acceptor. Residue R130 is the Nucleophile of the active site. 2 residues coordinate GTP: T151 and K156.

The protein belongs to the GTP cyclohydrolase II family. It depends on Zn(2+) as a cofactor.

It catalyses the reaction GTP + 4 H2O = 2,5-diamino-6-hydroxy-4-(5-phosphoribosylamino)-pyrimidine + formate + 2 phosphate + 3 H(+). The protein operates within cofactor biosynthesis; riboflavin biosynthesis; 5-amino-6-(D-ribitylamino)uracil from GTP: step 1/4. In terms of biological role, catalyzes the conversion of GTP to 2,5-diamino-6-ribosylamino-4(3H)-pyrimidinone 5'-phosphate (DARP), formate and pyrophosphate. In Psychromonas ingrahamii (strain DSM 17664 / CCUG 51855 / 37), this protein is GTP cyclohydrolase-2.